We begin with the raw amino-acid sequence, 1960 residues long: Nuclear pore complex protein Nup98-Nup96 (1960 aa).

Repeat copies occupy residues 2-3, 9-10, 18-19, 30-31, 35-36, 43-44, 59-60, 73-74, 81-82, 92-93, 105-106, 117-118, 125-126, 135-136, 148-149, 160-161, 163-164, 174-175, 264-265, 266-267, 282-283, 293-294, 304-305, 309-310, 319-320, 333-334, 352-353, 358-359, 365-366, 377-378, 384-385, 387-388, 400-401, 413-414, 426-427, 428-429, 441-442, 454-455, 467-468, 493-494, 496-497, 516-517, 527-528, 546-547, 553-554, and 565-566. The interval 2–566 is 46 X 2 AA repeats of F-G; the sequence is FGGAKPSFGA…GGSLGGGGFG (565 aa). 2 disordered regions span residues 698 to 768 and 781 to 860; these read KSVE…WLHP and TGMD…AANQ. Residues 704–718 are compositionally biased toward polar residues; sequence NPSSSIGSAPNTPQS. Positions 755-768 are enriched in basic and acidic residues; sequence ESQDNGRRESWLHP. Composition is skewed to polar residues over residues 781-794 and 806-850; these read TGMDQGSPHNSTLN and RPSS…SNRS. The Peptidase S59 domain occupies 886-1028; the sequence is RVGYYTIPSL…GSWVFRVKHF (143 aa). The active-site Nucleophile is S1029.

It belongs to the nucleoporin GLFG family. Part of the nuclear pore complex (NPC). Interacts with Rae1. Nuclear pore complex protein Nup98: Interacts with pzg and Chro. Interacts with MBD-R2; the interaction allows Nup98 recruitment to chromatin. Interacts with Trx. Interacts with Wds. Interacts with Mgtor and Cp190. Upon ecdysone stimulation, interacts with EcR, CTCF, su(Hw) and Trl. Post-translationally, isoform A and isoform C are autoproteolytically cleaved to yield Nup98 and Nup96 or Nup98 only, respectively. In terms of tissue distribution, expressed in brain.

The protein resides in the chromosome. Its subcellular location is the nucleus. The protein localises to the nucleoplasm. It is found in the nucleus membrane. It localises to the nuclear pore complex. Functionally, part of the nuclear pore complex (NPC). Required for MAD import as part of the Nup107-160 complex and required for nuclear export of Moe probably via its association with Rae1. Plays a role in nuclear mRNA export. Promotes cell antiviral response by up-regulating FoxK-dependent antiviral gene transcription. In germline stem cells, involved in their maintenance and division together with the TGF-Beta and EGFR signaling pathways. In larval lymph glands, has a role in the maintenance of hematopoiesis by regulating Pvr expression. Its function is as follows. Part of the nuclear pore complex (NPC). In the nucleoplasm, binds to transcriptionally active chromatin with a preference for regulatory regions; co-localizes with RNA polymerase II in a RNA-independent manner and before transition into transcription elongation. Plays a role in the transcriptional memory process by stabilizing enhancer-promoter loops and by mediating anchoring of chromatin to the nuclear pore complex region. During larval development, interacts with trx and MBD-R2 and regulates transcription of developmental genes including ecdysone-responsive genes such as Eip74 and E23. In terms of biological role, part of the nuclear pore complex (NPC). In Drosophila melanogaster (Fruit fly), this protein is Nuclear pore complex protein Nup98-Nup96.